The primary structure comprises 446 residues: Mannosyltransferase KTR6 (446 aa).

Residues 1–8 (MHVLLSKK) are Cytoplasmic-facing. Residues 9–29 (IARFLLISFVFVLALMVTINH) form a helical; Signal-anchor for type II membrane protein membrane-spanning segment. The segment at 30 to 114 (PKTKQMSEQY…MVPSYINHRG (85 aa)) is stem region. At 30 to 446 (PKTKQMSEQY…DKPEGWDRLP (417 aa)) the chain is on the lumenal side. N-linked (GlcNAc...) asparagine glycans are attached at residues Asn82 and Asn98. The tract at residues 115–446 (SPPKACFVSL…DKPEGWDRLP (332 aa)) is catalytic. Glu334 (nucleophile) is an active-site residue.

Belongs to the glycosyltransferase 15 family.

The protein localises to the membrane. The protein operates within protein modification; protein glycosylation. In terms of biological role, glycosyltransferase that transfers an alpha-D-mannosyl residue from GDP-mannose into lipid-linked oligosaccharide, forming an alpha-(1-&gt;2)-D-mannosyl-D-mannose linkage. Required for addition of mannosylphosphate in yeast mannan. Recognizes any oligosaccharides with at least one alpha-1,2-linked mannobiose unit. This is Mannosyltransferase KTR6 (KTR6) from Saccharomyces cerevisiae (strain ATCC 204508 / S288c) (Baker's yeast).